Here is a 409-residue protein sequence, read N- to C-terminus: WW domain-containing oxidoreductase (409 aa).

A disordered region spans residues 1-23 (MIALPDTDSEDELPPGWEERATD). WW domains lie at 11-44 (DELPPGWEERATDDGTVCYVNQQGKTSQWTHPRT) and 52-86 (GELPLGWEKYYDEQGKRFMFLNKETQQRTNVDPRL). Residue 128–134 (GANCGIG) coordinates NADP(+). Substrate is bound at residue Ser257. Residue Tyr288 is the Proton acceptor of the active site.

This sequence belongs to the short-chain dehydrogenases/reductases (SDR) family.

The protein localises to the cytoplasm. Its subcellular location is the mitochondrion. The protein resides in the golgi apparatus. It localises to the lysosome. In terms of biological role, putative oxidoreductase. May control genotoxic stress-induced cell death. May play a role in TGFB1 signaling and TGFB1-mediated cell death. May also play a role in tumor necrosis factor (TNF)-mediated cell death. May play a role in Wnt signaling. The sequence is that of WW domain-containing oxidoreductase (Wwox) from Drosophila melanogaster (Fruit fly).